The primary structure comprises 598 residues: Thiol:disulfide interchange protein DsbD (598 aa).

An N-terminal signal peptide occupies residues 1-21 (MRALLTFFVAGLLVLSSPAMA). Residues Cys-130 and Cys-136 are joined by a disulfide bond. The segment at 158 to 180 (TMPTQTASPLDTSTANTSTPQPL) is disordered. Positions 159-180 (MPTQTASPLDTSTANTSTPQPL) are enriched in polar residues. 8 helical membrane-spanning segments follow: residues 198–220 (LLFLALGVGLAFTPCVLPMYPIL), 240–262 (LVYVQGMALTYTLLGLVVASAGL), 274–296 (LIGLSILFVTLALSMFGVYTLQL), 324–346 (AISGLVCSPCTTAPLSGALLYVA), 353–375 (TGGVALYALAMGMGIPLILVAVF), 385–407 (GWMDHVKTLFGFVLLAAPIFLLE), 414–431 (WSTALWSALGIAAFGWLY), and 446–468 (AVGIIAVLGLFASAQPALNYWFA). A disulfide bond links Cys-212 and Cys-333. Residues 456–598 (FASAQPALNY…FLEHIQRISN (143 aa)) form the Thioredoxin domain. Cys-513 and Cys-516 form a disulfide bridge.

It belongs to the thioredoxin family. DsbD subfamily.

It localises to the cell inner membrane. It catalyses the reaction [protein]-dithiol + NAD(+) = [protein]-disulfide + NADH + H(+). The enzyme catalyses [protein]-dithiol + NADP(+) = [protein]-disulfide + NADPH + H(+). Its function is as follows. Required to facilitate the formation of correct disulfide bonds in some periplasmic proteins and for the assembly of the periplasmic c-type cytochromes. Acts by transferring electrons from cytoplasmic thioredoxin to the periplasm. This transfer involves a cascade of disulfide bond formation and reduction steps. The polypeptide is Thiol:disulfide interchange protein DsbD (Vibrio vulnificus (strain YJ016)).